The chain runs to 535 residues: Triacylglyceride transporter MHAS_02168/C731_2106 (535 aa).

Topologically, residues 1–18 are cytoplasmic; that stretch reads MAFPQTPNRLIRPRRTSR. The chain crosses the membrane as a helical span at residues 19–39; the sequence is GIAISAGGLAVLLGALDTYVV. Residues 40–60 are Periplasmic-facing; that stretch reads VSIVTDIMRDVGIAVNQIQRV. A helical transmembrane segment spans residues 61-82; sequence TPIITGYLLGYIAAMPLLGRAS. Over 83-86 the chain is Cytoplasmic; sequence DRFG. The helical transmembrane segment at 87–107 threads the bilayer; the sequence is RKLLIQISLAGFALGSVITAL. Topologically, residues 108–111 are periplasmic; the sequence is ATNL. Residues 112 to 136 form a helical membrane-spanning segment; that stretch reads DVLVAGRVIQGAASGALLPVTLALA. Residues 137–145 lie on the Cytoplasmic side of the membrane; sequence ADLWATHKR. The helical transmembrane segment at 146–167 threads the bilayer; sequence AAVLGGVGAAQELGAVLGPIYG. Over 168–177 the chain is Periplasmic; sequence IFVVWLFHHW. The chain crosses the membrane as a helical span at residues 178–198; sequence QAVFWVNVPLALIAMVLIHIS. The Cytoplasmic portion of the chain corresponds to 199–212; the sequence is LPPRVRTEEPQRVD. The chain crosses the membrane as a helical span at residues 213–230; it reads VTGGLLLALALGLATIGL. Residues 231–243 are Periplasmic-facing; it reads YNAEPDGKQVLPE. A helical transmembrane segment spans residues 244–263; it reads YGPPLIIGAVIAAVAFLVWE. At 264 to 278 the chain is on the cytoplasmic side; it reads RFARTRLLDPAGVRF. A helical membrane pass occupies residues 279–300; the sequence is RPFLIALLVSLVTGGALMVTLV. The Periplasmic portion of the chain corresponds to 301–320; that stretch reads NVELFGQGVLGLDQDEAVFL. 2 helical membrane-spanning segments follow: residues 321 to 343 and 344 to 364; these read LARFLIALPVGALLGGWIATRVG and DRAVTAVGLLIAAGGFYLIAQ. The Periplasmic segment spans residues 365–384; the sequence is WPADVLESRHDLGFVSLPTL. Residues 373 to 382 are beta-hairpin; that stretch reads RHDLGFVSLP. The helical transmembrane segment at 385–407 threads the bilayer; it reads DTDLAIAGFGLGLVIAPLTSAAL. At 408–415 the chain is on the cytoplasmic side; that stretch reads RVVPAAQH. A helical membrane pass occupies residues 416 to 440; the sequence is GIASAAVVVARMIGMLIGIAALSAW. Residues 441 to 487 lie on the Periplasmic side of the membrane; that stretch reads GLYRFNQYLKEQLAALPPAPADFPGGQMAGQMMRLRTATVQAYVLQY. The chain crosses the membrane as a helical span at residues 488-507; the sequence is GEIFAITAGLCVFGAVLGLF. The Cytoplasmic segment spans residues 508-535; it reads IAGRREHAEESADAVDGVSNARDRAPSA.

The protein belongs to the major facilitator superfamily. P55 (TC 2.A.1.3.34) family.

The protein localises to the cell inner membrane. In terms of biological role, in association with lipoprotein LprG transports triacylglycerides (TAG) across the inner cell membrane, probably transfering them to lipoprotein LprG in the periplasm. TAG probably regulates lipid metabolism and growth regulation and plays a structural role in the outer membrane. Mutagenesis and molecular modeling suggests TAG (and maybe other lipids) enters the central cavity of the P55 transporter from within the cell inner membrane via clefts on the cytoplasmic face of P55 between TM5-TM8 and TM2-TM11. From there the lipid is probably transferred to the hydrophobic cavity of LprG. The lprG-MHAS_02167/C731_2107 operon complements the vancomycin sensitivity of an M.smegmatis knockout of the same operon. Probably required with LprG for normal surface localization of lipoarabinomannan (LAM). The protein is Triacylglyceride transporter MHAS_02168/C731_2106 of Mycolicibacterium hassiacum (strain DSM 44199 / CIP 105218 / JCM 12690 / 3849) (Mycobacterium hassiacum).